We begin with the raw amino-acid sequence, 501 residues long: Glutamate--tRNA ligase (501 aa).

Positions 11-21 (PSPTGPLHIGG) match the 'HIGH' region motif. Residues 260 to 264 (KLSKR) carry the 'KMSKS' region motif. Residue lysine 263 participates in ATP binding.

This sequence belongs to the class-I aminoacyl-tRNA synthetase family. Glutamate--tRNA ligase type 1 subfamily. As to quaternary structure, monomer.

It is found in the cytoplasm. The enzyme catalyses tRNA(Glu) + L-glutamate + ATP = L-glutamyl-tRNA(Glu) + AMP + diphosphate. Catalyzes the attachment of glutamate to tRNA(Glu) in a two-step reaction: glutamate is first activated by ATP to form Glu-AMP and then transferred to the acceptor end of tRNA(Glu). The polypeptide is Glutamate--tRNA ligase (Flavobacterium johnsoniae (strain ATCC 17061 / DSM 2064 / JCM 8514 / BCRC 14874 / CCUG 350202 / NBRC 14942 / NCIMB 11054 / UW101) (Cytophaga johnsonae)).